Here is a 229-residue protein sequence, read N- to C-terminus: Large ribosomal subunit protein uL1 (229 aa).

Belongs to the universal ribosomal protein uL1 family. As to quaternary structure, part of the 50S ribosomal subunit.

Its function is as follows. Binds directly to 23S rRNA. The L1 stalk is quite mobile in the ribosome, and is involved in E site tRNA release. In terms of biological role, protein L1 is also a translational repressor protein, it controls the translation of the L11 operon by binding to its mRNA. The polypeptide is Large ribosomal subunit protein uL1 (Listeria innocua serovar 6a (strain ATCC BAA-680 / CLIP 11262)).